A 494-amino-acid polypeptide reads, in one-letter code: 3-octaprenyl-4-hydroxybenzoate carboxy-lyase (494 aa).

Asn-172 serves as a coordination point for Mn(2+). Prenylated FMN contacts are provided by residues Ile-175–Arg-177, Arg-189–Leu-191, and Arg-194–Gly-195. Glu-238 lines the Mn(2+) pocket. The active-site Proton donor is the Asp-294.

Belongs to the UbiD family. Homohexamer. Requires prenylated FMN as cofactor. Mn(2+) is required as a cofactor.

The protein localises to the cell membrane. The catalysed reaction is a 4-hydroxy-3-(all-trans-polyprenyl)benzoate + H(+) = a 2-(all-trans-polyprenyl)phenol + CO2. It participates in cofactor biosynthesis; ubiquinone biosynthesis. Its function is as follows. Catalyzes the decarboxylation of 3-octaprenyl-4-hydroxy benzoate to 2-octaprenylphenol, an intermediate step in ubiquinone biosynthesis. This Janthinobacterium sp. (strain Marseille) (Minibacterium massiliensis) protein is 3-octaprenyl-4-hydroxybenzoate carboxy-lyase.